The primary structure comprises 290 residues: Ribosomal RNA small subunit methyltransferase A (290 aa).

N27, L29, G54, E75, D100, and N125 together coordinate S-adenosyl-L-methionine.

Belongs to the class I-like SAM-binding methyltransferase superfamily. rRNA adenine N(6)-methyltransferase family. RsmA subfamily.

It localises to the cytoplasm. The catalysed reaction is adenosine(1518)/adenosine(1519) in 16S rRNA + 4 S-adenosyl-L-methionine = N(6)-dimethyladenosine(1518)/N(6)-dimethyladenosine(1519) in 16S rRNA + 4 S-adenosyl-L-homocysteine + 4 H(+). Functionally, specifically dimethylates two adjacent adenosines (A1518 and A1519) in the loop of a conserved hairpin near the 3'-end of 16S rRNA in the 30S particle. May play a critical role in biogenesis of 30S subunits. The polypeptide is Ribosomal RNA small subunit methyltransferase A (Streptococcus thermophilus (strain ATCC BAA-491 / LMD-9)).